The following is a 322-amino-acid chain: Quinolinate synthase (322 aa).

Iminosuccinate-binding residues include His37 and Ser54. Cys99 provides a ligand contact to [4Fe-4S] cluster. Iminosuccinate-binding positions include 125-127 and Ser142; that span reads YIN. Cys185 provides a ligand contact to [4Fe-4S] cluster. Residues 211–213 and Thr228 contribute to the iminosuccinate site; that span reads HPE. Residue Cys278 participates in [4Fe-4S] cluster binding.

Belongs to the quinolinate synthase family. Type 2 subfamily. [4Fe-4S] cluster serves as cofactor.

It localises to the cytoplasm. It carries out the reaction iminosuccinate + dihydroxyacetone phosphate = quinolinate + phosphate + 2 H2O + H(+). It participates in cofactor biosynthesis; NAD(+) biosynthesis; quinolinate from iminoaspartate: step 1/1. Catalyzes the condensation of iminoaspartate with dihydroxyacetone phosphate to form quinolinate. The sequence is that of Quinolinate synthase from Prosthecochloris aestuarii (strain DSM 271 / SK 413).